Consider the following 1370-residue polypeptide: MENWSALELLPKVGIPTDFLTHVKTSAGEEMFEALRIYYGDDPERYNIHFEAIFGTFCNRLEWVYFLTSGLAAAAHAIKFHDLNKLTTGKMLFHVQVPRVASGAGLPTSRQTTIMVTKYSEKSPITIPFELSAACLTYLRETFEGTILDKILNVEAMHTVLRALKNTADAMERGLIHSFLQTLLRKAPPYFVVQTLVENATLARQALNRIQRSNILQSFKAKMLATLFLLNRTRDRDYVLKFLTRLAEAATDSILDNPTTYTTSSGAKISGVMVSTANVMQIIMSLLSSHITKETVSAPATYGNFVLSPENAVTAISYHSILADFNSYKAHLTSGQPHLPNDSLSQAGAHSLTPLSMDVIRLGEKTVIMENLRRVYKNTDTKDPLERNVDLTFFFPVGLYLPEDRGYTTVESKVKLNDTVRNALPTTAYLLNRDRAVQKIDFVDALKTLCHPVLHEPAPCLQTFTERGPPSEPAMQRLLECRFQQEPMGGAARRIPHFYRVRREVPRTVNEMKQDFVVTDFYKVGNITLYTELHPFFDFTHCQENSETVALCTPRIVIGNLPDGLAPGPFHELRTWEIMEHMRLRPPPDYEETLRLFKTTVTSPNYPELCYLVDVLVHGNVDAFLLIRTFVARCIVNMFHTRQLLVFAHSYALVTLIAEHLADGALPPQLLFHYRNLVAVLRLVTRISALPGLNNGQLAEEPLSAYVNALHDHRLWPPFVTHLPRNMEGVQVVADRQPLNPANIEARHHGVSDVPRLGAMDADEPLFVDDYRATDDEWTLQKVFYLCLMPAMTNNRACGLGLNLKTLLVDLFYRPAFLLMPAATAVSTSGTTSKESTSGVTPEDSIAAQRQAVGEMLTELVEDVATDAHTPLLQACRELFLAVQFVGEHVKVLEVRAPLDHAQRQGLPDFISRQHVLYNGCCVVTAPKTLIEYSLPVPFHRFYSNPTICAALSDDIKRYVTEFPHYHRHDGGFPLPTAFAHEYHNWLRSPFSRYSATCPNVLHSVMTLAAMLYKISPVSLVLQTKAHIHPGFALTAVRTDTFEVDMLLYSGKSCTSVIINNPIVTKEERDISTTYHVTQNINTVDMGLGYTSNTCVAYVNRVRTDMGVRVQDLFRVFPMNVYRHDEVDRWIRHAAGVERPQLLDTETISMLTFGSMSERNAAATVHGQKAACELILTPVTMDVNYFKIPNNPRGRASCMLAVDPYDTEAATKAIYDHREADAQTFAATHNPWASQAGCLSDVLYNTRHRERLGYNSKFYSPCAQYFNTEEIIAANKTLFKTIDEYLLRAKDCIRGDTDTQYVCVEGTEQLIENPCRLTQEALPILSTTTLALMETKLKGGAGAFATSETHFGNYVVGEIIPLQQSMLFNS.

The protein belongs to the herpesviridae major capsid protein family. Homomultimer. Makes the hexons and eleven out of twelve pentons. Interacts with triplex proteins 1/TRX1 and 2/TRX2; adjacent capsomers are linked together in groups of three by triplexes, heterotrimeric complexes composed of one molecule of TRX1 and two molecules of TRX2. Interacts with scaffold protein; this interaction allows efficient MCP transport to the host nucleus. Interacts with capsid vertex component 2/CVC2. Interacts with the small capsomere-interacting protein/SCP.

It localises to the virion. The protein resides in the host nucleus. Functionally, self-assembles to form an icosahedral capsid with a T=16 symmetry, about 200 nm in diameter, and consisting of 150 hexons and 12 pentons (total of 162 capsomers). Hexons form the edges and faces of the capsid and are each composed of six MCP molecules. In contrast, one penton is found at each of the 12 vertices. Eleven of the pentons are MCP pentamers, while the last vertex is occupied by the portal complex. The capsid is surrounded by a layer of proteinaceous material designated the tegument which, in turn, is enclosed in an envelope of host cell-derived lipids containing virus-encoded glycoproteins. The chain is Major capsid protein from Human cytomegalovirus (strain AD169) (HHV-5).